The sequence spans 247 residues: Oil body-associated protein 2B (247 aa).

Residues 1 to 28 (MASSDKVPVACPASSGDGKEPMGNPTKT) are disordered.

The protein belongs to the OBAP family.

The polypeptide is Oil body-associated protein 2B (Arabidopsis thaliana (Mouse-ear cress)).